We begin with the raw amino-acid sequence, 130 residues long: Larval cuticle protein 1 (130 aa).

The N-terminal stretch at 1–16 is a signal peptide; sequence MFKFVMICAVLGLAVA. Residues 43 to 104 enclose the Chitin-binding type R&amp;R domain; the sequence is ADGFDSSLHT…PSGAWIPTPP (62 aa).

Functionally, component of the larval cuticle. The sequence is that of Larval cuticle protein 1 (Lcp1) from Drosophila melanogaster (Fruit fly).